A 367-amino-acid polypeptide reads, in one-letter code: Glutamate 5-kinase (367 aa).

Lysine 9 provides a ligand contact to ATP. Serine 49, aspartate 136, and asparagine 148 together coordinate substrate. Residues 168 to 169 and 210 to 216 each bind ATP; these read TD and TGGMKSK. Residues 276–350 enclose the PUA domain; the sequence is SGQIEVDAGA…GMQSQDIQVR (75 aa).

The protein belongs to the glutamate 5-kinase family.

Its subcellular location is the cytoplasm. It catalyses the reaction L-glutamate + ATP = L-glutamyl 5-phosphate + ADP. It participates in amino-acid biosynthesis; L-proline biosynthesis; L-glutamate 5-semialdehyde from L-glutamate: step 1/2. Its function is as follows. Catalyzes the transfer of a phosphate group to glutamate to form L-glutamate 5-phosphate. The protein is Glutamate 5-kinase of Bacillus cereus (strain B4264).